Consider the following 640-residue polypeptide: 1,4-alpha-glucan branching enzyme GlgB (640 aa).

Catalysis depends on Asp317, which acts as the Nucleophile. Glu370 serves as the catalytic Proton donor.

This sequence belongs to the glycosyl hydrolase 13 family. GlgB subfamily. In terms of assembly, monomer.

It catalyses the reaction Transfers a segment of a (1-&gt;4)-alpha-D-glucan chain to a primary hydroxy group in a similar glucan chain.. It participates in glycan biosynthesis; glycogen biosynthesis. Its function is as follows. Catalyzes the formation of the alpha-1,6-glucosidic linkages in glycogen by scission of a 1,4-alpha-linked oligosaccharide from growing alpha-1,4-glucan chains and the subsequent attachment of the oligosaccharide to the alpha-1,6 position. The chain is 1,4-alpha-glucan branching enzyme GlgB from Nitratidesulfovibrio vulgaris (strain DP4) (Desulfovibrio vulgaris).